The sequence spans 382 residues: Chaperone protein DnaJ 2 (382 aa).

One can recognise a J domain in the interval 4–68 (DYYGLLGVSK…DKRRIVDLGG (65 aa)). The CR-type zinc finger occupies 132 to 214 (GVTKQVTVDT…CMGDGRIRAR (83 aa)). Zn(2+) contacts are provided by Cys-145, Cys-148, Cys-162, Cys-165, Cys-188, Cys-191, Cys-202, and Cys-205. 4 CXXCXGXG motif repeats span residues 145-152 (CDRCQGKG), 162-169 (CDTCGGRG), 188-195 (CPTCRGVG), and 202-209 (CQQCMGDG).

The protein belongs to the DnaJ family. In terms of assembly, homodimer. Interacts with RNase J. Zn(2+) is required as a cofactor.

Its subcellular location is the cytoplasm. Its function is as follows. Participates actively in the response to hyperosmotic and heat shock by preventing the aggregation of stress-denatured proteins and by disaggregating proteins, also in an autonomous, DnaK-independent fashion. Unfolded proteins bind initially to DnaJ; upon interaction with the DnaJ-bound protein, DnaK hydrolyzes its bound ATP, resulting in the formation of a stable complex. GrpE releases ADP from DnaK; ATP binding to DnaK triggers the release of the substrate protein, thus completing the reaction cycle. Several rounds of ATP-dependent interactions between DnaJ, DnaK and GrpE are required for fully efficient folding. Also involved, together with DnaK and GrpE, in the DNA replication of plasmids through activation of initiation proteins. Inhibits the beta-lactamase and RNase activity of RNase J. This chain is Chaperone protein DnaJ 2, found in Mycobacterium tuberculosis (strain ATCC 25618 / H37Rv).